A 335-amino-acid chain; its full sequence is UPF0284 protein TK0853 (335 aa).

It belongs to the UPF0284 family.

The chain is UPF0284 protein TK0853 from Thermococcus kodakarensis (strain ATCC BAA-918 / JCM 12380 / KOD1) (Pyrococcus kodakaraensis (strain KOD1)).